Reading from the N-terminus, the 135-residue chain is Small ribosomal subunit protein bS18 (135 aa).

The tract at residues 1-65 is disordered; it reads MARPDMGGPK…GDEGGGRRGF (65 aa). Gly residues predominate over residues 9–41; it reads PKTGGFGGPRSGGFGGGGGGGGGFGGGGFGGGR. Positions 42 to 61 are enriched in basic and acidic residues; the sequence is GGDRGDRGDRDDRGGDEGGG.

Belongs to the bacterial ribosomal protein bS18 family. As to quaternary structure, part of the 30S ribosomal subunit. Forms a tight heterodimer with protein bS6.

Functionally, binds as a heterodimer with protein bS6 to the central domain of the 16S rRNA, where it helps stabilize the platform of the 30S subunit. The chain is Small ribosomal subunit protein bS18 from Anaeromyxobacter sp. (strain K).